We begin with the raw amino-acid sequence, 152 residues long: UPF0178 protein swp_1285 (152 aa).

Belongs to the UPF0178 family.

This is UPF0178 protein swp_1285 from Shewanella piezotolerans (strain WP3 / JCM 13877).